The following is a 458-amino-acid chain: Transmembrane protein adipocyte-associated 1 homolog (458 aa).

N-linked (GlcNAc...) asparagine glycosylation is found at asparagine 21 and asparagine 45. A run of 7 helical transmembrane segments spans residues 81–101 (VILV…GSVI), 114–134 (AFTL…AYSM), 152–172 (IIIK…GLLF), 181–201 (ILIA…VQVI), 225–245 (FLFW…IMCL), 263–283 (LIYC…AALI), and 291–311 (LCFV…IIYF). N-linked (GlcNAc...) asparagine glycans are attached at residues asparagine 323 and asparagine 324. A disordered region spans residues 409–458 (RTGSDDYAHHRDSMLSEPSTGTTTRHLKGLGPQGSLVFEDDPSSLTSLRM). The segment covering 411–422 (GSDDYAHHRDSM) has biased composition (basic and acidic residues).

The protein belongs to the UPF0359 family.

It is found in the membrane. The polypeptide is Transmembrane protein adipocyte-associated 1 homolog (tpra-1) (Caenorhabditis elegans).